A 192-amino-acid polypeptide reads, in one-letter code: dTTP/UTP pyrophosphatase (192 aa).

The Proton acceptor role is filled by Asp71.

The protein belongs to the Maf family. YhdE subfamily. It depends on a divalent metal cation as a cofactor.

It localises to the cytoplasm. The catalysed reaction is dTTP + H2O = dTMP + diphosphate + H(+). The enzyme catalyses UTP + H2O = UMP + diphosphate + H(+). Its function is as follows. Nucleoside triphosphate pyrophosphatase that hydrolyzes dTTP and UTP. May have a dual role in cell division arrest and in preventing the incorporation of modified nucleotides into cellular nucleic acids. The sequence is that of dTTP/UTP pyrophosphatase from Clostridium kluyveri (strain NBRC 12016).